The following is a 1328-amino-acid chain: Peroxidasin homolog pxn-2 (1328 aa).

The first 16 residues, 1-16 (MLLEFLLLIGISLSTA), serve as a signal peptide directing secretion. The LRRNT domain maps to 17 to 45 (CPSECRCAGLDVHCEGKNLTAIPGHIPIA). N-linked (GlcNAc...) asparagine glycosylation is present at Asn34. 6 LRR repeats span residues 42–66 (IPIA…NFQA), 67–90 (LPNL…LLDS), 92–114 (PGLK…STAP), 116–137 (ALVS…LVSH), 138–161 (SPYM…FFNS), and 164–191 (VPTL…QFAD). Asn77 carries an N-linked (GlcNAc...) asparagine glycan. Asn220 carries N-linked (GlcNAc...) asparagine glycosylation. The disordered stretch occupies residues 305 to 332 (KKMQASSSTEPPITTTTMEPMTTSTMDS). Residues 310–332 (SSSTEPPITTTTMEPMTTSTMDS) show a composition bias toward low complexity. Ig-like C2-type domains lie at 346–438 (PEID…FSVS) and 445–532 (PVII…ANLL). Residues Cys373 and Cys422 are joined by a disulfide bond. 2 N-linked (GlcNAc...) asparagine glycosylation sites follow: Asn403 and Asn455. Cys466 and Cys516 are disulfide-bonded. N-linked (GlcNAc...) asparagine glycosylation occurs at Asn630. Residues Cys660 and Cys676 are joined by a disulfide bond. A heme b-binding site is contributed by Asp754. Catalysis depends on His755, which acts as the Proton acceptor. Asp756 serves as a coordination point for Ca(2+). 2 disulfide bridges follow: Cys775–Cys785 and Cys779–Cys807. Asn776 carries an N-linked (GlcNAc...) asparagine glycan. Ca(2+)-binding residues include Thr839, Tyr841, Asp843, and Ser845. Asn894 is a glycosylation site (N-linked (GlcNAc...) asparagine). Heme b contacts are provided by Glu913 and His1008. One copy of the LRR 7 repeat lies at 1085 to 1109 (ALDLAALNIQRGRDHGLPSWTEYRK). 2 cysteine pairs are disulfide-bonded: Cys1111-Cys1168 and Cys1209-Cys1236. 2 N-linked (GlcNAc...) asparagine glycosylation sites follow: Asn1112 and Asn1128. Residues 1204–1225 (LSKIICTNGDDIDRIQRDIFVY) form an LRR 8 repeat. Asn1228 carries an N-linked (GlcNAc...) asparagine glycan. The segment at 1266–1297 (IGGDEKAKRRKRRHHHSKKSCHDKGKRRKSGD) is disordered. Residues 1273–1295 (KRRKRRHHHSKKSCHDKGKRRKS) are compositionally biased toward basic residues. N-linked (GlcNAc...) asparagine glycosylation occurs at Asn1300.

The protein belongs to the peroxidase family. XPO subfamily. Ca(2+) is required as a cofactor. Heme b serves as cofactor. As to expression, expressed in vulval muscles and in some neurons including PVQ. Expressed in the hypodermis and in coelomocytes.

Its subcellular location is the secreted. The protein resides in the extracellular space. The protein localises to the extracellular matrix. It localises to the basement membrane. It catalyses the reaction L-lysyl-[collagen] + L-methionyl-[collagen] + H2O2 = [collagen]-L-lysyl-N-S-L-methionyl-[collagen] + 2 H2O + H(+). The enzyme catalyses bromide + H2O2 = hypobromite + H2O. It carries out the reaction L-lysyl-[collagen] + L-methionyl-[collagen] + hypobromite = [collagen]-L-lysyl-N-S-L-methionyl-[collagen] + bromide + H2O + H(+). The catalysed reaction is L-tyrosyl-[protein] + bromide + H2O2 + H(+) = 3-bromo-L-tyrosyl-[protein] + 2 H2O. It catalyses the reaction hypobromite + L-tyrosyl-[protein] + H(+) = 3-bromo-L-tyrosyl-[protein] + H2O. Catalyzes the two-electron oxidation of bromide by hydrogen peroxide and generates hypobromite as a reactive intermediate which mediates the formation of sulfilimine cross-links between methionine and hydroxylysine residues within an uncross-linked collagen IV/COL4A1 NC1 hexamer. Required for embryonic morphogenesis playing a role in epidermal elongation at the twofold stage of embryonic development. Required post-embryonically for basement membrane integrity and muscle-epidermal attachments, and specifically in the function of basement membrane components such as the type IV collagens. May have a role in inhibiting axon regeneration. May functionally antagonize the peroxidasin pxn-1. This is Peroxidasin homolog pxn-2 from Caenorhabditis elegans.